The following is a 601-amino-acid chain: Arginine--tRNA ligase (601 aa).

The short motif at 135–145 (ANPTGPLHLGH) is the 'HIGH' region element.

It belongs to the class-I aminoacyl-tRNA synthetase family. As to quaternary structure, monomer.

The protein resides in the cytoplasm. The catalysed reaction is tRNA(Arg) + L-arginine + ATP = L-arginyl-tRNA(Arg) + AMP + diphosphate. The polypeptide is Arginine--tRNA ligase (Gloeobacter violaceus (strain ATCC 29082 / PCC 7421)).